A 513-amino-acid chain; its full sequence is Bone morphogenetic protein 6 (513 aa).

The first 20 residues, 1–20, serve as a signal peptide directing secretion; it reads MPGLGRRAQWLCWWWGLLCS. Positions 21–374 are excised as a propeptide; sequence CCGPPPLRPP…VSEVHVRTTR (354 aa). Disordered regions lie at residues 38 to 66, 89 to 131, and 145 to 200; these read AAGGQLLGDGGSPGRTEQPPPSPQSSSGF, LPHR…RLKS, and ADND…ASPL. The segment covering 98 to 121 has biased composition (low complexity); that stretch reads GLQQPQPPALRQQEEQQQQQQLPR. Residues 158–172 are compositionally biased toward polar residues; sequence QQSWPHEAASSSQRR. Residues N241, N269, N386, N404, and N454 are each glycosylated (N-linked (GlcNAc...) asparagine). Residues 373–398 form a disordered region; sequence TRSASSRRRQQSRNRSTQSQDVARVS. Intrachain disulfides connect C412–C478, C441–C510, and C445–C512.

The protein belongs to the TGF-beta family. As to quaternary structure, interacts with SOSTDC1. Interacts (when glycosylated) with type I receptor ACVR1; the interaction may induce HAMP expression. Interacts with type II receptor ACVR2B. Interacts with Hemojuvelin/HJV. Interacts with ERFE; the interaction inhibits BMP-induced transcription of HAMP. Interacts with BMPR1A/ALK3. Forms heterodimers with BMP2 in vitro; the heterodimer then binds to its receptor BMPR1A /ALK3 and may induce HAMP expression. Glycosylated at Asn-454. Glycosylation is crucial for recognition by the activin receptor type I/ACVR1.

It is found in the secreted. In terms of biological role, growth factor of the TGF-beta superfamily that plays essential roles in many developmental processes including cartilage and bone formation. Also plays an important role in the regulation of HAMP/hepcidin expression and iron metabolism by acting as a ligand for hemojuvelin/HJV. Also acts to promote expression of HAMP, potentially via the interaction with its receptor BMPR1A/ALK3. Initiates the canonical BMP signaling cascade by associating with type I receptor ACVR1 and type II receptor ACVR2B. In turn, ACVR1 propagates signal by phosphorylating SMAD1/5/8 that travel to the nucleus and act as activators and repressors of transcription of target. Can also signal through non-canonical pathway such as TAZ-Hippo signaling cascade to modulate VEGF signaling by regulating VEGFR2 expression. The polypeptide is Bone morphogenetic protein 6 (BMP6) (Homo sapiens (Human)).